The sequence spans 143 residues: MRHGKAGRKLNRTSSHRKAMFANMAASLIEHEQIVTTLPKAKELRPIVEKLVTLGKRGDLHARRQAIAAIRSETLVRRLFDTLAPRYASRNGGYTRIMKAGFRHGDNAAMAVIEFVDRDPSVKGAADRARVEAEAANEEAEAA.

It belongs to the bacterial ribosomal protein bL17 family. In terms of assembly, part of the 50S ribosomal subunit. Contacts protein L32.

This chain is Large ribosomal subunit protein bL17, found in Chelativorans sp. (strain BNC1).